A 669-amino-acid chain; its full sequence is Galactocerebrosidase (669 aa).

The N-terminal stretch at M1 to A26 is a signal peptide. T93, W135, and N181 together coordinate substrate. E182 acts as the Proton donor/acceptor in catalysis. Catalysis depends on E258, which acts as the Nucleophile. Cysteines 271 and 378 form a disulfide. The N-linked (GlcNAc...) asparagine glycan is linked to N363. R380 provides a ligand contact to substrate. N387, N543, and N586 each carry an N-linked (GlcNAc...) asparagine glycan.

It belongs to the glycosyl hydrolase 59 family.

It localises to the lysosome. The catalysed reaction is a beta-D-galactosyl-(1&lt;-&gt;1')-N-acylsphing-4-enine + H2O = an N-acylsphing-4-enine + D-galactose. It carries out the reaction beta-D-galactosyl-(1&lt;-&gt;1)-sphing-4-enine + H2O = sphing-4-enine + D-galactose. It catalyses the reaction a D-galactosylceramide + H2O = an N-acyl-sphingoid base + D-galactose. In terms of biological role, hydrolyzes the galactose ester bonds of glycolipids such as galactosylceramide and galactosylsphingosine. Enzyme with very low activity responsible for the lysosomal catabolism of galactosylceramide, a major lipid in myelin, kidney and epithelial cells of small intestine and colon. The sequence is that of Galactocerebrosidase from Canis lupus familiaris (Dog).